A 345-amino-acid chain; its full sequence is Transmembrane protein 144 homolog (345 aa).

10 helical membrane passes run 3–23 (IAVG…MFVP), 32–52 (GIFV…VVYS), 61–81 (PLAM…VPIM), 84–104 (IGIG…GWAA), 120–140 (PFLN…FSQI), 193–213 (LAII…VPVI), 233–253 (VFSH…GYVI), 265–285 (LVGP…SWFV), 293–313 (AVSF…WSVF), and 324–344 (LRLL…VGVS).

Belongs to the TMEM144 family.

It is found in the membrane. The protein is Transmembrane protein 144 homolog of Caenorhabditis elegans.